The primary structure comprises 762 residues: 5-methyltetrahydropteroyltriglutamate--homocysteine methyltransferase (762 aa).

Residues 17-20 (REWK) and K111 contribute to the 5-methyltetrahydropteroyltri-L-glutamate site. L-homocysteine contacts are provided by residues 435–437 (IGS) and E488. L-methionine contacts are provided by residues 435–437 (IGS) and E488. 5-methyltetrahydropteroyltri-L-glutamate-binding positions include 519-520 (RC) and W565. L-homocysteine is bound at residue D603. D603 is a binding site for L-methionine. E609 contributes to the 5-methyltetrahydropteroyltri-L-glutamate binding site. Positions 645, 647, and 669 each coordinate Zn(2+). H698 (proton donor) is an active-site residue. C730 lines the Zn(2+) pocket.

Belongs to the vitamin-B12 independent methionine synthase family. Requires Zn(2+) as cofactor.

The enzyme catalyses 5-methyltetrahydropteroyltri-L-glutamate + L-homocysteine = tetrahydropteroyltri-L-glutamate + L-methionine. The protein operates within amino-acid biosynthesis; L-methionine biosynthesis via de novo pathway; L-methionine from L-homocysteine (MetE route): step 1/1. Catalyzes the transfer of a methyl group from 5-methyltetrahydrofolate to homocysteine resulting in methionine formation. The polypeptide is 5-methyltetrahydropteroyltriglutamate--homocysteine methyltransferase (Bacillus cereus (strain ATCC 14579 / DSM 31 / CCUG 7414 / JCM 2152 / NBRC 15305 / NCIMB 9373 / NCTC 2599 / NRRL B-3711)).